Here is a 176-residue protein sequence, read N- to C-terminus: Membrane glycoprotein UL144 (176 aa).

The first 20 residues, Met-1–Thr-20, serve as a signal peptide directing secretion. TNFR-Cys repeat units lie at residues Val-22–Cys-56 and Pro-58–Cys-95. 6 cysteine pairs are disulfide-bonded: Cys-23–Cys-34, Cys-35–Cys-48, Cys-38–Cys-56, Cys-59–Cys-71, Cys-74–Cys-87, and Cys-77–Cys-95. Residues Leu-134 to Ile-154 traverse the membrane as a helical segment.

Interacts with host TRIM23; this interaction causes auto-ubiquitination of TRAF6, leading to NF-kappaB activation.

It is found in the membrane. Functionally, activates NF-kappaB in a tumor necrosis factor receptor (TNFR)-associated factor 6 (TRAF6)-dependent manner, causing the up-regulation of the chemokine CCL22. In Homo sapiens (Human), this protein is Membrane glycoprotein UL144 (UL144).